We begin with the raw amino-acid sequence, 386 residues long: Eukaryotic translation initiation factor 3 subunit M (386 aa).

Residues 181 to 343 (NSELASKVMI…RKVHISSTMH (163 aa)) form the PCI domain.

It belongs to the eIF-3 subunit M family. In terms of assembly, component of the eukaryotic translation initiation factor 3 (eIF-3) complex.

The protein localises to the cytoplasm. In terms of biological role, component of the eukaryotic translation initiation factor 3 (eIF-3) complex, which is involved in protein synthesis of a specialized repertoire of mRNAs and, together with other initiation factors, stimulates binding of mRNA and methionyl-tRNAi to the 40S ribosome. The eIF-3 complex specifically targets and initiates translation of a subset of mRNAs involved in cell proliferation. This Aedes aegypti (Yellowfever mosquito) protein is Eukaryotic translation initiation factor 3 subunit M.